The following is a 295-amino-acid chain: Probable protein phosphatase 2C 54 (295 aa).

Residues 78–289 (GHGVVSVMGR…ENINVIVIDL (212 aa)) enclose the PPM-type phosphatase domain. Residues D112, G113, D228, and E280 each coordinate Mn(2+).

The protein belongs to the PP2C family. Mg(2+) serves as cofactor. Requires Mn(2+) as cofactor.

It carries out the reaction O-phospho-L-seryl-[protein] + H2O = L-seryl-[protein] + phosphate. The catalysed reaction is O-phospho-L-threonyl-[protein] + H2O = L-threonyl-[protein] + phosphate. The chain is Probable protein phosphatase 2C 54 from Arabidopsis thaliana (Mouse-ear cress).